Here is a 287-residue protein sequence, read N- to C-terminus: uncharacterized protein (287 aa).

2 helical membrane passes run 12–32 and 217–237; these read IILL…GAAL and YTIG…VLIV.

The protein resides in the cell membrane. This is an uncharacterized protein from Mycoplasma pneumoniae (strain ATCC 29342 / M129 / Subtype 1) (Mycoplasmoides pneumoniae).